The following is a 352-amino-acid chain: Glutamine synthetase (352 aa).

The GS beta-grasp domain maps to 3–82 (YQAEYIWIDG…LCEVQLTDFT (80 aa)). The region spanning 87–352 (TRAAALGVAE…TTPAPAEASV (266 aa)) is the GS catalytic domain. Mg(2+) contacts are provided by E108 and E110. Position 164 (E164) interacts with ATP. E169 and E176 together coordinate Mg(2+). E272 serves as a coordination point for L-glutamate.

This sequence belongs to the glutamine synthetase family. As to quaternary structure, homooctamer and homotetramer. Requires Mg(2+) as cofactor.

The protein localises to the cytoplasm. It carries out the reaction L-glutamate + NH4(+) + ATP = L-glutamine + ADP + phosphate + H(+). Catalyzes the ATP-dependent biosynthesis of glutamine from glutamate and ammonia. This chain is Glutamine synthetase, found in Frankia alni.